The primary structure comprises 339 residues: GTPase Era (339 aa).

Positions 4–48 constitute an RPE1 insert domain; it reads RHLAKFAYREEFKGDTEALAAAVREDASTGSTSQLPLEVQFGKMS. Residues 51–220 form the Era-type G domain; the sequence is KTVSVCIIGR…ITSKAKISPW (170 aa). The segment at 59–66 is G1; the sequence is GRPNSGKS. Residue 59–66 participates in GTP binding; the sequence is GRPNSGKS. A G2 region spans residues 85-89; that stretch reads QTTRS. The segment at 106 to 109 is G3; the sequence is DTPG. GTP is bound by residues 106 to 110 and 168 to 171; these read DTPGI and NKID. Positions 168–171 are G4; sequence NKID. The interval 196–198 is G5; the sequence is ISA. Residues 248 to 325 enclose the KH type-2 domain; that stretch reads LQKELPYKLT…HLFLFVKVRE (78 aa).

This sequence belongs to the TRAFAC class TrmE-Era-EngA-EngB-Septin-like GTPase superfamily. Era GTPase family. As to quaternary structure, monomer.

The protein resides in the cytoplasm. It is found in the cell inner membrane. In terms of biological role, an essential GTPase that binds both GDP and GTP, with rapid nucleotide exchange. Plays a role in 16S rRNA processing and 30S ribosomal subunit biogenesis and possibly also in cell cycle regulation and energy metabolism. The protein is GTPase Era of Rickettsia conorii (strain ATCC VR-613 / Malish 7).